The chain runs to 165 residues: UPF0303 protein Bxeno_A1932 (165 aa).

This sequence belongs to the UPF0303 family.

The chain is UPF0303 protein Bxeno_A1932 from Paraburkholderia xenovorans (strain LB400).